Reading from the N-terminus, the 154-residue chain is Leghemoglobin-2 (154 aa).

Residues Ala3 to Asn151 enclose the Globin domain. Position 46 (Ser46) interacts with heme b. Ser46 bears the Phosphoserine mark. His64 provides a ligand contact to O2. Positions 67, 98, and 101 each coordinate heme b. At Tyr139 the chain carries Nitrated tyrosine.

The protein belongs to the plant globin family. In terms of assembly, monomer. In terms of processing, nitrated in effective nodules and particularly in hypoxic conditions; this mechanism may play a protective role in the symbiosis by buffering toxic peroxynitrite NO(2)(-). Nitration level decrease during nodule senescence. Phosphorylation at Ser-46 disrupts the molecular environment of its porphyrin ring oxygen binding pocket, thus leading to a reduced oxygen consumption and to the delivery of oxygen O(2) to symbiosomes. As to expression, root nodules.

The protein resides in the cytoplasm. Its subcellular location is the cytosol. It localises to the nucleus. Functionally, leghemoglobin that reversibly binds oxygen O(2) through a pentacoordinated heme iron. In root nodules, facilitates the diffusion of oxygen to the bacteroids while preventing the bacterial nitrogenase from being inactivated by buffering dioxygen, nitric oxide and carbon monoxide, and promoting the formation of reactive oxygen species (ROS, e.g. H(2)O(2)). This role is essential for symbiotic nitrogen fixation (SNF). This Lupinus luteus (European yellow lupine) protein is Leghemoglobin-2.